The primary structure comprises 115 residues: Anamorsin homolog 2 (115 aa).

Positions 30-115 (VKEATKGEDC…KVKLNLTDDI (86 aa)) are disordered. Positions 39, 46, 49, and 51 each coordinate [2Fe-2S] cluster. Positions 39-51 (CTTRRRACKNCTC) are fe-S binding site A. Positions 77, 80, 88, and 91 each coordinate [4Fe-4S] cluster. 2 consecutive short sequence motifs (cx2C motif) follow at residues 77–80 (CGNC) and 88–91 (CATC). Positions 77 to 91 (CGNCAKGDAFRCATC) are fe-S binding site B.

This sequence belongs to the anamorsin family. In terms of assembly, monomer. [2Fe-2S] cluster is required as a cofactor. [4Fe-4S] cluster serves as cofactor.

The protein localises to the cytoplasm. The protein resides in the mitochondrion intermembrane space. Functionally, component of the cytosolic iron-sulfur (Fe-S) protein assembly (CIA) machinery. Required for the maturation of extramitochondrial Fe-S proteins. Part of an electron transfer chain functioning in an early step of cytosolic Fe-S biogenesis, facilitating the de novo assembly of a [4Fe-4S] cluster on the cytosolic Fe-S scaffold complex. Electrons are transferred from NADPH via a FAD- and FMN-containing diflavin oxidoreductase. Together with the diflavin oxidoreductase, also required for the assembly of the diferric tyrosyl radical cofactor of ribonucleotide reductase (RNR), probably by providing electrons for reduction during radical cofactor maturation in the catalytic small subunit. In Trypanosoma cruzi (strain CL Brener), this protein is Anamorsin homolog 2.